A 429-amino-acid chain; its full sequence is 4-hydroxybutyrate coenzyme A transferase (429 aa).

Residue glycine 215–isoleucine 219 coordinates CoA. The active-site 5-glutamyl coenzyme A thioester intermediate is glutamate 238. Glycine 336 lines the CoA pocket.

The protein belongs to the acetyl-CoA hydrolase/transferase family.

This Clostridium kluyveri (strain ATCC 8527 / DSM 555 / NBRC 12016 / NCIMB 10680 / K1) protein is 4-hydroxybutyrate coenzyme A transferase (cat2).